We begin with the raw amino-acid sequence, 88 residues long: Sapecin-B (88 aa).

An N-terminal signal peptide occupies residues 1–24 (MKFLTSLLLLFVVVMVSAVNLSMA). A propeptide spanning residues 25 to 54 (KESANQLTERLQELDGAAIQEPAELNRHKR) is cleaved from the precursor. 3 disulfides stabilise this stretch: Cys-57–Cys-78, Cys-64–Cys-84, and Cys-68–Cys-86.

Belongs to the invertebrate defensin family. Type 1 subfamily. Hemocytes and fat body.

The protein localises to the secreted. Sapecins, which are potent bactericidal proteins, are produced in response to injury. Sapecin B is cytotoxic to Gram-positive bacteria. The polypeptide is Sapecin-B (Sarcophaga peregrina (Flesh fly)).